Consider the following 268-residue polypeptide: Casein kinase II subunit beta (268 aa).

Positions 222 to 268 (LSNNNQNNQNNNINNNNNNNNNNNNNNNNNNNNQQNNNNQQNNNTNK) are disordered. The segment covering 224–268 (NNNQNNQNNNINNNNNNNNNNNNNNNNNNNNQQNNNNQQNNNTNK) has biased composition (low complexity).

This sequence belongs to the casein kinase 2 subunit beta family. In terms of assembly, casein kinase II/CK2 is a tetramer composed of two alpha subunit and two beta subunits.

Functionally, regulatory subunit of casein kinase II/CK2. As part of the kinase complex regulates the basal catalytic activity of the alpha subunit a constitutively active serine/threonine-protein kinase that phosphorylates a large number of substrates containing acidic residues C-terminal to the phosphorylated serine or threonine. This is Casein kinase II subunit beta (csnk2b) from Dictyostelium discoideum (Social amoeba).